Here is a 285-residue protein sequence, read N- to C-terminus: Acetyl-coenzyme A carboxylase carboxyl transferase subunit beta (285 aa).

The CoA carboxyltransferase N-terminal domain occupies 29–285 (IMTKCPKCKK…ILKIHQEVTK (257 aa)). Zn(2+) contacts are provided by cysteine 33, cysteine 36, cysteine 52, and cysteine 55. The C4-type zinc finger occupies 33–55 (CPKCKKIMYTKELAENLNVCFNC).

It belongs to the AccD/PCCB family. As to quaternary structure, acetyl-CoA carboxylase is a heterohexamer composed of biotin carboxyl carrier protein (AccB), biotin carboxylase (AccC) and two subunits each of ACCase subunit alpha (AccA) and ACCase subunit beta (AccD). The cofactor is Zn(2+).

It is found in the cytoplasm. The enzyme catalyses N(6)-carboxybiotinyl-L-lysyl-[protein] + acetyl-CoA = N(6)-biotinyl-L-lysyl-[protein] + malonyl-CoA. Its pathway is lipid metabolism; malonyl-CoA biosynthesis; malonyl-CoA from acetyl-CoA: step 1/1. In terms of biological role, component of the acetyl coenzyme A carboxylase (ACC) complex. Biotin carboxylase (BC) catalyzes the carboxylation of biotin on its carrier protein (BCCP) and then the CO(2) group is transferred by the transcarboxylase to acetyl-CoA to form malonyl-CoA. In Staphylococcus aureus (strain Newman), this protein is Acetyl-coenzyme A carboxylase carboxyl transferase subunit beta.